The primary structure comprises 188 residues: Elongation factor P (188 aa).

Belongs to the elongation factor P family.

The protein resides in the cytoplasm. It functions in the pathway protein biosynthesis; polypeptide chain elongation. In terms of biological role, involved in peptide bond synthesis. Stimulates efficient translation and peptide-bond synthesis on native or reconstituted 70S ribosomes in vitro. Probably functions indirectly by altering the affinity of the ribosome for aminoacyl-tRNA, thus increasing their reactivity as acceptors for peptidyl transferase. The polypeptide is Elongation factor P (Rhodospirillum centenum (strain ATCC 51521 / SW)).